The sequence spans 431 residues: 5-methylthioadenosine/S-adenosylhomocysteine deaminase (431 aa).

Residues histidine 64 and histidine 66 each coordinate Zn(2+). Glutamate 93, arginine 145, and histidine 183 together coordinate substrate. Histidine 210 is a binding site for Zn(2+). Positions 213 and 299 each coordinate substrate. Aspartate 299 is a Zn(2+) binding site.

Belongs to the metallo-dependent hydrolases superfamily. MTA/SAH deaminase family. The cofactor is Zn(2+).

It carries out the reaction S-adenosyl-L-homocysteine + H2O + H(+) = S-inosyl-L-homocysteine + NH4(+). The enzyme catalyses S-methyl-5'-thioadenosine + H2O + H(+) = S-methyl-5'-thioinosine + NH4(+). Catalyzes the deamination of 5-methylthioadenosine and S-adenosyl-L-homocysteine into 5-methylthioinosine and S-inosyl-L-homocysteine, respectively. Is also able to deaminate adenosine. This is 5-methylthioadenosine/S-adenosylhomocysteine deaminase from Syntrophomonas wolfei subsp. wolfei (strain DSM 2245B / Goettingen).